The following is a 418-amino-acid chain: Putative ion-transport protein YfeO (418 aa).

Helical transmembrane passes span 10 to 30 (LLLS…LIVV), 54 to 74 (DSPF…GLVI), 99 to 119 (ALPG…SLGP), 120 to 140 (EHPI…RLLP), 149 to 169 (ILAS…AALI), 186 to 206 (LFAP…FFHP), 223 to 243 (ILSG…AVWC), 258 to 278 (VLML…AGPV), 300 to 320 (DYFL…ASGF), 322 to 342 (GGRI…LHEH), 343 to 363 (VPAV…VLVV), and 386 to 406 (LLCI…IMMV).

This sequence belongs to the chloride channel (TC 2.A.49) family.

The protein localises to the cell membrane. This is Putative ion-transport protein YfeO from Escherichia fergusonii (strain ATCC 35469 / DSM 13698 / CCUG 18766 / IAM 14443 / JCM 21226 / LMG 7866 / NBRC 102419 / NCTC 12128 / CDC 0568-73).